The sequence spans 317 residues: ADP-L-glycero-D-manno-heptose-6-epimerase (317 aa).

Residues 10–11, 31–32, lysine 38, lysine 53, 75–79, and asparagine 92 each bind NADP(+); these read FI, DD, and QGACS. Residue tyrosine 139 is the Proton acceptor of the active site. Residue lysine 143 participates in NADP(+) binding. Asparagine 166 provides a ligand contact to substrate. The NADP(+) site is built by valine 167 and lysine 175. The active-site Proton acceptor is lysine 175. Substrate is bound by residues glycine 177, histidine 184, 198-201, arginine 211, and tyrosine 275; that span reads FQGH.

It belongs to the NAD(P)-dependent epimerase/dehydratase family. HldD subfamily. In terms of assembly, homopentamer. Requires NADP(+) as cofactor.

The enzyme catalyses ADP-D-glycero-beta-D-manno-heptose = ADP-L-glycero-beta-D-manno-heptose. Its pathway is nucleotide-sugar biosynthesis; ADP-L-glycero-beta-D-manno-heptose biosynthesis; ADP-L-glycero-beta-D-manno-heptose from D-glycero-beta-D-manno-heptose 7-phosphate: step 4/4. Catalyzes the interconversion between ADP-D-glycero-beta-D-manno-heptose and ADP-L-glycero-beta-D-manno-heptose via an epimerization at carbon 6 of the heptose. The polypeptide is ADP-L-glycero-D-manno-heptose-6-epimerase (Shewanella loihica (strain ATCC BAA-1088 / PV-4)).